The following is a 126-amino-acid chain: Prefoldin subunit beta (126 aa).

Belongs to the prefoldin subunit beta family. As to quaternary structure, heterohexamer of two alpha and four beta subunits.

Its subcellular location is the cytoplasm. Its function is as follows. Molecular chaperone capable of stabilizing a range of proteins. Seems to fulfill an ATP-independent, HSP70-like function in archaeal de novo protein folding. In Pyrobaculum aerophilum (strain ATCC 51768 / DSM 7523 / JCM 9630 / CIP 104966 / NBRC 100827 / IM2), this protein is Prefoldin subunit beta (pfdB).